The sequence spans 616 residues: MALLQIAEPGQSAAPHQHKLAVGIDLGTTNSLVAAVRSGSSEVLRDEQDRLLIPSIVHLTEDQAIVGYEAGQLASQDPQNTIISVKRLIGRSCTDVQQRYPNLPYQFNATENGLPLLKTRRGLLSPVEISAEILKKLTALAEQRLGGELTGAVITVPAYFDDAQRQSTKDAAKLAGLKVLRLLNEPTAAAIAYGLDSGQEGVIAVYDLGGGTFDVSILRLSKGVFEVLATGGDTALGGDDFDHLLAEWIVKKSTVAPQNDREKRQLIEVANQVKVALTTNDKIRISYAEQNLEIMRDEFNFLISGLVKRSLLACRRTLKDANLTPSDILEVVMVGGSTRIPYVREQVGEFFQCTPLTSIDPDKVVALGAAIQADILVGNKPDSEMLLLDVIPLSLGIETMGGLVEKIIPRNTTIPVARAQEFTTFKDGQTAMSVHVLQGEREMVTDCRSLARFTLRGIPAMVAGAARIRVTYQVDADGLLSVTAVEKSTGVQASTQVKPSYGLTDDEIANMLKSSMEHAKEDIQTRLLTEQRVDATRVIESVYSALQQDEDLLDDNELSAVKNALVSLQKLIQEEDSLAIKQGIKMLDQATQEFASRRMDKSIRRALSGQHIEHIK.

This sequence belongs to the heat shock protein 70 family.

Chaperone involved in the maturation of iron-sulfur cluster-containing proteins. Has a low intrinsic ATPase activity which is markedly stimulated by HscB. This chain is Chaperone protein HscA homolog, found in Histophilus somni (strain 2336) (Haemophilus somnus).